We begin with the raw amino-acid sequence, 338 residues long: RAB6-interacting golgin (338 aa).

2 stretches are compositionally biased toward basic and acidic residues: residues 1–14 (MTEKFNGFSHDEIL) and 46–59 (RMPDKIFRQADQLR). 2 disordered regions span residues 1–109 (MTEK…LNLD) and 127–188 (ARDK…SPFK). Composition is skewed to low complexity over residues 60-73 (KQQQQQPQQPIQKP) and 153-167 (SGGDSQTTSSTDDGS). Positions 192–244 (LKDFEQHRRMIEEQNKQKKQMLYQAIEQHTQKTAAESRKIEEIRHELSKLESD) form a coiled coil. The interval 244 to 260 (DLAVDVALLRKQIDNAC) is essential for Sas-6 binding. The tract at residues 246–286 (AVDVALLRKQIDNACIHFANVEKQYVKIEAQFLRAKIELHN) is necessary for localization to the centrosome. Positions 246–323 (AVDVALLRKQ…TELMQKVGLS (78 aa)) are necessary for localization to the Golgi. The necessary for interaction with Sas-6 and essential for homodimerization stretch occupies residues 260 to 286 (CIHFANVEKQYVKIEAQFLRAKIELHN).

Belongs to the GORAB family. In terms of assembly, homodimer (via C-terminus); dimerization appears to be required for its trans-Golgi localization but not for its function and centriolar localization. Interacts (via C-terminus) with Rab6; binds Rab6 as a homodimer, this interaction seems to be required for trans-Golgi localization. Interacts (via C-terminus) with Sas-6; binds as a monomer to a Sas-6 homodimer.

The protein resides in the cytoplasm. The protein localises to the cytoskeleton. It is found in the microtubule organizing center. It localises to the centrosome. Its subcellular location is the centriole. The protein resides in the golgi apparatus. The protein localises to the trans-Golgi network. Functionally, required for centriole duplication likely through its interaction with Sas-6. During embryogenesis, maternally provided protein is required for centrosome duplication and nuclear division cycles of the syncytial embryos. In femoral chordotonal organs, required for sensory cilia structural integrity and functionality necessary for motor coordination. In male germline, has a role in cytokinesis which seems dependent on its localization to the Golgi. In Drosophila melanogaster (Fruit fly), this protein is RAB6-interacting golgin.